A 302-amino-acid chain; its full sequence is GrpE protein homolog 1, mitochondrial (302 aa).

The transit peptide at 1 to 39 (MLVSRVLSRVSRSAGLRSSFSSVVTPKRNQIPIVASRFH) directs the protein to the mitochondrion. Residues 77–97 (SAEPKGNESNTEVPKTGETSE) are disordered.

Belongs to the GrpE family. Probable component of the PAM complex, at least composed of SSC1 (mtHsp70), MGE1, TIM44, PAM16/TIM16, PAM17 and PAM18/TIM14. Interacts with SSQ1.

Its subcellular location is the mitochondrion matrix. Essential component of the PAM complex, a complex required for the translocation of transit peptide-containing proteins from the inner membrane into the mitochondrial matrix in an ATP-dependent manner. Seems to control the nucleotide-dependent binding of mitochondrial HSP70 to substrate proteins. Binds ATP. Interacts with copper ions Cu(2+). The chain is GrpE protein homolog 1, mitochondrial from Arabidopsis thaliana (Mouse-ear cress).